A 430-amino-acid chain; its full sequence is GPI mannosyltransferase 1 (430 aa).

Over 1–11 the chain is Cytoplasmic; it reads MELQSLIDTVS. The chain crosses the membrane as a helical span at residues 12-32; the sequence is LQKLLLLGALLRLILIAYAFF. The Lumenal segment spans residues 33 to 72; the sequence is HDQWFRVKYTDIDYMIVVDGARHMWNGGSPFDRTTFRYTP. Residues 73–93 form a helical membrane-spanning segment; sequence LLAALVMPSIWIANPMGKLIF. Residues 94–115 are Cytoplasmic-facing; the sequence is ASSDLGAAWYCYGVLKSFAKER. Residues 116-136 form a helical membrane-spanning segment; sequence SAKWMVSLFILFNPIVLSVST. Topologically, residues 137–163 are lumenal; the sequence is RGNSDMLVTFMSLMVLSKFARRKCYQA. Residues 164 to 184 traverse the membrane as a helical segment; that stretch reads AAVLGFAVHFKIYPIIYALPL. Topologically, residues 185 to 206 are cytoplasmic; it reads TLGVWEQSVAASTNTWRRVVKT. The helical transmembrane segment at 207–227 threads the bilayer; the sequence is AVVVSICALMAAISFAVPTVL. Over 228–360 the chain is Lumenal; that stretch reads CYMKYGQQYL…AFKFFSWVKA (133 aa). Residues 361-381 form a helical membrane-spanning segment; the sequence is LGVVLMWAATIPLWVTTAVPL. At 382–388 the chain is on the cytoplasmic side; the sequence is EFHGYSD. The helical transmembrane segment at 389–409 threads the bilayer; that stretch reads FAQLWIVSCLFFLAMVVLASM. At 410–430 the chain is on the lumenal side; sequence LARIAYRVQCTKCSAKSIKVA.

This sequence belongs to the PIGM family.

The protein resides in the endoplasmic reticulum membrane. It participates in glycolipid biosynthesis; glycosylphosphatidylinositol-anchor biosynthesis. Mannosyltransferase involved in glycosylphosphatidylinositol-anchor biosynthesis. Transfers the first alpha-1,4-mannose to GlcN-PI during GPI precursor assembly. This is GPI mannosyltransferase 1 (PIGM) from Trypanosoma brucei brucei (strain 927/4 GUTat10.1).